The following is a 318-amino-acid chain: MDSTYCFSHKHIFGIEQMSTEDIVHILDTAQSFKEISERSIKKVPTLRGKTVVNLFLEPSTRTRLSFEVAGKRLSADTFNISGSTSSTTKGETLVDTARNIEAMRPDAIVLRHSSSGAAQILAKHIDASIINAGDGTHEHPSQALLDMMTVRDNFGSIKGLIITIIGDIAHSRVALSDIIGFTKMGATVRLAGPATFIPMGIEAMGVEVYSSVAEAVQDANVVMALRIQKERQNDPLIPSLREYSICYGVNKKLLERAADDVIIMHPGPVNRGVELNPDVADGKGSVILDQVTNGVAVRMALLYLVAGGNRNGEEQGV.

Carbamoyl phosphate is bound by residues Arg-62 and Thr-63. Lys-90 is a binding site for L-aspartate. Carbamoyl phosphate is bound by residues Arg-112, His-140, and Gln-143. Arg-173 and Arg-227 together coordinate L-aspartate. The carbamoyl phosphate site is built by Gly-268 and Pro-269.

It belongs to the aspartate/ornithine carbamoyltransferase superfamily. ATCase family. In terms of assembly, heterododecamer (2C3:3R2) of six catalytic PyrB chains organized as two trimers (C3), and six regulatory PyrI chains organized as three dimers (R2).

It carries out the reaction carbamoyl phosphate + L-aspartate = N-carbamoyl-L-aspartate + phosphate + H(+). Its pathway is pyrimidine metabolism; UMP biosynthesis via de novo pathway; (S)-dihydroorotate from bicarbonate: step 2/3. Its function is as follows. Catalyzes the condensation of carbamoyl phosphate and aspartate to form carbamoyl aspartate and inorganic phosphate, the committed step in the de novo pyrimidine nucleotide biosynthesis pathway. In Desulfotalea psychrophila (strain LSv54 / DSM 12343), this protein is Aspartate carbamoyltransferase catalytic subunit.